The primary structure comprises 303 residues: Aspartate carbamoyltransferase catalytic subunit (303 aa).

The carbamoyl phosphate site is built by Arg51 and Thr52. Lys80 is a binding site for L-aspartate. Carbamoyl phosphate-binding residues include Arg101, His129, and Gln132. 2 residues coordinate L-aspartate: Arg162 and Arg221. Residues Leu260 and Pro261 each contribute to the carbamoyl phosphate site.

It belongs to the aspartate/ornithine carbamoyltransferase superfamily. ATCase family. Heterooligomer of catalytic and regulatory chains.

The enzyme catalyses carbamoyl phosphate + L-aspartate = N-carbamoyl-L-aspartate + phosphate + H(+). Its pathway is pyrimidine metabolism; UMP biosynthesis via de novo pathway; (S)-dihydroorotate from bicarbonate: step 2/3. Catalyzes the condensation of carbamoyl phosphate and aspartate to form carbamoyl aspartate and inorganic phosphate, the committed step in the de novo pyrimidine nucleotide biosynthesis pathway. This is Aspartate carbamoyltransferase catalytic subunit from Saccharolobus solfataricus (strain ATCC 35092 / DSM 1617 / JCM 11322 / P2) (Sulfolobus solfataricus).